Consider the following 221-residue polypeptide: Phosphoribosylformylglycinamidine synthase subunit PurQ (221 aa).

The 220-residue stretch at 2–221 (KTAVIQFPGS…VFESLKTVKK (220 aa)) folds into the Glutamine amidotransferase type-1 domain. Cys87 serves as the catalytic Nucleophile. Active-site residues include His195 and Glu197.

Part of the FGAM synthase complex composed of 1 PurL, 1 PurQ and 2 PurS subunits.

Its subcellular location is the cytoplasm. The enzyme catalyses N(2)-formyl-N(1)-(5-phospho-beta-D-ribosyl)glycinamide + L-glutamine + ATP + H2O = 2-formamido-N(1)-(5-O-phospho-beta-D-ribosyl)acetamidine + L-glutamate + ADP + phosphate + H(+). It carries out the reaction L-glutamine + H2O = L-glutamate + NH4(+). It functions in the pathway purine metabolism; IMP biosynthesis via de novo pathway; 5-amino-1-(5-phospho-D-ribosyl)imidazole from N(2)-formyl-N(1)-(5-phospho-D-ribosyl)glycinamide: step 1/2. Part of the phosphoribosylformylglycinamidine synthase complex involved in the purines biosynthetic pathway. Catalyzes the ATP-dependent conversion of formylglycinamide ribonucleotide (FGAR) and glutamine to yield formylglycinamidine ribonucleotide (FGAM) and glutamate. The FGAM synthase complex is composed of three subunits. PurQ produces an ammonia molecule by converting glutamine to glutamate. PurL transfers the ammonia molecule to FGAR to form FGAM in an ATP-dependent manner. PurS interacts with PurQ and PurL and is thought to assist in the transfer of the ammonia molecule from PurQ to PurL. In Deinococcus radiodurans (strain ATCC 13939 / DSM 20539 / JCM 16871 / CCUG 27074 / LMG 4051 / NBRC 15346 / NCIMB 9279 / VKM B-1422 / R1), this protein is Phosphoribosylformylglycinamidine synthase subunit PurQ.